Consider the following 1363-residue polypeptide: MAVEEKNSPTGAAMTNTGILVPSSQQSLPEWWTKTQKFFSRENTITPTFGYFRLLFGTQPGKTDIALIVIGTIAGIGAGIPFPLLGILFGELVDDLNSSTCSTTQAPPGGYQAAITTKVLQVIYVSILNFVCMYIHTGCWSMVGERLVRRLRTKYFHSLLRQEIAFTDTLPSGDVTSRLVSDIEVIQAGTSEKVGLFIGTISYFVAAYIVAFLKVATIAAMLMSVVPIYFLMAFGGGHYIKKYSGRISTHINAATSIVSSSLSHMSIVHAFNANARLEALFAQHLVSARMDALKKAITHSIQFGMLYFVAYASNALAFWQGSRMIADLAEGKPSKVSVGAVYTVIFVLLDASFVLSQMAPFMHIFASAASAGDRLMTTIKRQSAIDGTSSEGDSTISLASEEIELQDVTFNYPARPEVPVLQGVSFKIPPNKHTAIVGTSGSGKSTVVALLERLYDPITGCVRVGNRDLKEINVRHLRGSIGLVQQEPNLLDRSILENIAHGLVSSSQEKHKHLLPTLLGPSLSELTEKIRQGASEDEAVTEQGDVVREIVNLTRHAATLSNAIDFINALPDGLATRVGSSGAELSGGQKQRIALARALIRDPPVLLLDEATAALDSTSERLIQAALNKVSENVTTVSIAHRLATAKDADNIIVMQKGRVMEQGTHMDLVARDGVYAGMVRLQNIGKFSSSSSIMTESTQVDANIDRSLTTDTLLNKEEKLSLEQGVLDEKEKPAQLYMPEEADSLPTEPENEKEKPKQTLWATMKGSFPLIRPNILLISLGLITSIMIGVSYTGEAVIFGHTVGSLSVCRGGPSIRSSGMLFGLLFFILAIVKFAAVIVNGAAFGWAAEKTLYRTRVLSLRSLLRQPLEWHNADGRTPGLLVALVTSDASALSSLTGTTIGVLFSTVANLFAGVILSQCHRMEDSRSPSGYLTRIKHQKAYAKATAITVESVDNIKSIAAFSLEQEAYSVFNRSLKAPYKSNMKSVLHGNFWLSLAYSISTLVYALAYWWGSQQILAGMYTQVQFFIVLPALLFSTQSCGQMFALVPDISKARIAASNIVDLLSIKHEGDEEYDKTGSKASAKHTDPRFNMLEDKPRDVEAQLITTTPSSFPTKGMGVQFRNVHFRYPSRPNQPALDDLSINISPGQFCALVGPSGSGKSTTFALLEKFYNPASGSIIIDGVDITKQSGAAFRDTIALVPQENVMFEGTVAFNIGLGARPDVEATQEEIEEACRLANIHDTIAALPDGYNTVCSQDGKQFSGGQRQRLSIARALVRKPRLLLLDESTSALDVESEKHVQDALAKVARKTTIVAIAHRLNTIHRADRIFMIERGRCVDQGTHAELVERCESYRANVIHQSLDA.

Residues 65–85 (IALIVIGTIAGIGAGIPFPLL) traverse the membrane as a helical segment. One can recognise an ABC transmembrane type-1 1 domain in the interval 69–367 (VIGTIAGIGA…MAPFMHIFAS (299 aa)). N-linked (GlcNAc...) asparagine glycosylation is present at Asn-97. The next 5 membrane-spanning stretches (helical) occupy residues 119–139 (VLQV…HTGC), 193–213 (KVGL…VAFL), 215–235 (VATI…MAFG), 301–321 (IQFG…FWQG), and 336–356 (VSVG…FVLS). The 280-residue stretch at 403–682 (IELQDVTFNY…DGVYAGMVRL (280 aa)) folds into the ABC transporter 1 domain. 438–445 (GTSGSGKS) serves as a coordination point for ATP. 2 N-linked (GlcNAc...) asparagine glycosylation sites follow: Asn-552 and Asn-633. Residues 738 to 758 (YMPEEADSLPTEPENEKEKPK) are disordered. The next 3 membrane-spanning stretches (helical) occupy residues 781 to 801 (LGLI…VIFG), 820 to 840 (GMLF…AVIV), and 896 to 916 (LTGT…AGVI). The ABC transmembrane type-1 2 domain maps to 781-1052 (LGLITSIMIG…MFALVPDISK (272 aa)). N-linked (GlcNAc...) asparagine glycosylation is present at Asn-973. 2 helical membrane passes run 992 to 1012 (FWLS…YWWG) and 1016 to 1036 (ILAG…LLFS). In terms of domain architecture, ABC transporter 2 spans 1119–1358 (VQFRNVHFRY…CESYRANVIH (240 aa)). Position 1154–1161 (1154–1161 (GPSGSGKS)) interacts with ATP.

The protein belongs to the ABC transporter superfamily. ABCB family. Multidrug resistance exporter (TC 3.A.1.201) subfamily.

The protein resides in the cell membrane. Pleiotropic ABC efflux transporter that may be involved in the modulation susceptibility to a wide range of unrelated cytotoxic compounds. This is ABC multidrug transporter MDR2 from Trichophyton tonsurans (strain CBS 112818) (Scalp ringworm fungus).